The sequence spans 314 residues: Torsin-2A (314 aa).

An N-terminal signal peptide occupies residues 1–19; the sequence is MAVRWWIIPMLLLVPGSSG. ATP is bound at residue 86 to 93; the sequence is GWSGTGKT. Asn-142 and Asn-283 each carry an N-linked (GlcNAc...) asparagine glycan.

Belongs to the ClpA/ClpB family. Torsin subfamily. As to quaternary structure, homohexamer.

It localises to the endoplasmic reticulum lumen. This is Torsin-2A (tor2a) from Xenopus laevis (African clawed frog).